A 328-amino-acid chain; its full sequence is Opticin (328 aa).

Residues 1-19 form the signal peptide; the sequence is MKFLAFLSLLSLVLQKAET. Asn-46 carries N-linked (GlcNAc...) asparagine glycosylation. Tyr-69 bears the Sulfotyrosine mark. Asn-80 and Asn-101 each carry an N-linked (GlcNAc...) asparagine glycan. The LRRNT domain maps to 112–149; the sequence is LLNSQSSHGLPTCLVCVCLGSSVYCDDADLENIPPLPQ. 6 LRR repeats span residues 150–171, 174–195, 198–219, 244–265, 266–286, and 296–316; these read MTTY…DFKG, KLRR…ALRL, ALQD…PSGI, KLQF…LPLS, LRSL…TFCD, and QLED…PEAY. Cysteines 285 and 318 form a disulfide. Residue Asn-308 is glycosylated (N-linked (GlcNAc...) asparagine).

It belongs to the small leucine-rich proteoglycan (SLRP) family. SLRP class III subfamily. As to quaternary structure, homodimer. O-glycosylated. Post-translationally, sulfated on tyrosine residues. In terms of processing, proteolytically cleaved by MMP1, MMP2, MMP3, MMP7, MMP8, MMP9, ADAMTS4, and ADAMTS5. Proteolytically cleaved by MMP13. In terms of tissue distribution, expressed in cartilage (at protein level). Expressed in the vitreous collagen, inner limiting membrane, lens capsule, trabecular meshwork, anterior surface of the iris, the area adjacent to the nonpigmented ciliary epithelium, and weakly expressed in the retina of the eye (at protein level). Expressed in the nonpigmented ciliary epithelium of the eye.

The protein localises to the secreted. The protein resides in the extracellular space. Its subcellular location is the extracellular matrix. In terms of biological role, inhibits angiogenesis in the vitreous humor of the eye, and therefore represses neovascularization. Binds collagen fibrils. May be involved in collagen fiber organization via regulation of other members of the small leucine-rich repeat proteoglycan superfamily. The sequence is that of Opticin (Optc) from Mus musculus (Mouse).